Here is a 383-residue protein sequence, read N- to C-terminus: tRNA-specific 2-thiouridylase MnmA (383 aa).

ATP is bound by residues 10–17 (AMSGGVDS) and Met36. Residue Cys107 is the Nucleophile of the active site. Cys107 and Cys206 are disulfide-bonded. Gly131 is an ATP binding site. Residues 155–157 (KDQ) form an interaction with tRNA region. The active-site Cysteine persulfide intermediate is Cys206. The tract at residues 315–316 (RY) is interaction with tRNA.

This sequence belongs to the MnmA/TRMU family.

Its subcellular location is the cytoplasm. The enzyme catalyses S-sulfanyl-L-cysteinyl-[protein] + uridine(34) in tRNA + AH2 + ATP = 2-thiouridine(34) in tRNA + L-cysteinyl-[protein] + A + AMP + diphosphate + H(+). Functionally, catalyzes the 2-thiolation of uridine at the wobble position (U34) of tRNA, leading to the formation of s(2)U34. The protein is tRNA-specific 2-thiouridylase MnmA of Salinibacter ruber (strain DSM 13855 / M31).